A 124-amino-acid polypeptide reads, in one-letter code: Small ribosomal subunit protein uS12 (124 aa).

The interval 1 to 23 (MATINQLVRKPRRSKVTKSNSAA) is disordered. Aspartate 89 is modified (3-methylthioaspartic acid).

It belongs to the universal ribosomal protein uS12 family. Part of the 30S ribosomal subunit. Contacts proteins S8 and S17. May interact with IF1 in the 30S initiation complex.

In terms of biological role, with S4 and S5 plays an important role in translational accuracy. Functionally, interacts with and stabilizes bases of the 16S rRNA that are involved in tRNA selection in the A site and with the mRNA backbone. Located at the interface of the 30S and 50S subunits, it traverses the body of the 30S subunit contacting proteins on the other side and probably holding the rRNA structure together. The combined cluster of proteins S8, S12 and S17 appears to hold together the shoulder and platform of the 30S subunit. In Pseudoalteromonas translucida (strain TAC 125), this protein is Small ribosomal subunit protein uS12.